Consider the following 398-residue polypeptide: Acetate kinase (398 aa).

Position 7 (Asn7) interacts with Mg(2+). Position 14 (Lys14) interacts with ATP. Arg91 is a substrate binding site. The Proton donor/acceptor role is filled by Asp148. ATP-binding positions include 208–212 (HIGNG), 283–285 (DLR), and 331–335 (GVGEN). A Mg(2+)-binding site is contributed by Glu385.

It belongs to the acetokinase family. Homodimer. Mg(2+) serves as cofactor. Requires Mn(2+) as cofactor.

It is found in the cytoplasm. It carries out the reaction acetate + ATP = acetyl phosphate + ADP. Its pathway is metabolic intermediate biosynthesis; acetyl-CoA biosynthesis; acetyl-CoA from acetate: step 1/2. In terms of biological role, catalyzes the formation of acetyl phosphate from acetate and ATP. Can also catalyze the reverse reaction. This Porphyromonas gingivalis (strain ATCC 33277 / DSM 20709 / CIP 103683 / JCM 12257 / NCTC 11834 / 2561) protein is Acetate kinase.